Here is a 217-residue protein sequence, read N- to C-terminus: Cytidylate kinase (217 aa).

10–18 (GPAGAGKST) is a binding site for ATP.

This sequence belongs to the cytidylate kinase family. Type 1 subfamily.

The protein resides in the cytoplasm. It carries out the reaction CMP + ATP = CDP + ADP. The enzyme catalyses dCMP + ATP = dCDP + ADP. The chain is Cytidylate kinase from Clostridium botulinum (strain Langeland / NCTC 10281 / Type F).